Consider the following 37-residue polypeptide: Large ribosomal subunit protein bL36 (37 aa).

Belongs to the bacterial ribosomal protein bL36 family.

The sequence is that of Large ribosomal subunit protein bL36 from Helicobacter pylori (strain ATCC 700392 / 26695) (Campylobacter pylori).